We begin with the raw amino-acid sequence, 271 residues long: ATP synthase subunit a (271 aa).

The next 5 membrane-spanning stretches (helical) occupy residues 38 to 58 (FWTL…LFLV), 100 to 120 (LIAP…LMDL), 146 to 166 (DVNI…FYSI), 220 to 240 (LIFI…LNVP), and 242 to 262 (AIFH…LTIV).

This sequence belongs to the ATPase A chain family. In terms of assembly, F-type ATPases have 2 components, CF(1) - the catalytic core - and CF(0) - the membrane proton channel. CF(1) has five subunits: alpha(3), beta(3), gamma(1), delta(1), epsilon(1). CF(0) has three main subunits: a(1), b(2) and c(9-12). The alpha and beta chains form an alternating ring which encloses part of the gamma chain. CF(1) is attached to CF(0) by a central stalk formed by the gamma and epsilon chains, while a peripheral stalk is formed by the delta and b chains.

It localises to the cell inner membrane. Its function is as follows. Key component of the proton channel; it plays a direct role in the translocation of protons across the membrane. The protein is ATP synthase subunit a of Salmonella choleraesuis (strain SC-B67).